Here is a 62-residue protein sequence, read N- to C-terminus: MAKRCALTFKGPMVGNHVSHANNKNKRRSLPNLRSIKIQLDDGTTKRIKVAASTLRTMRKGA.

This sequence belongs to the bacterial ribosomal protein bL28 family.

The polypeptide is Large ribosomal subunit protein bL28 (Helicobacter pylori (strain HPAG1)).